Reading from the N-terminus, the 199-residue chain is NAD(P)H dehydrogenase (quinone) (199 aa).

The Flavodoxin-like domain occupies V4–V190. FMN contacts are provided by residues S10–I15 and T79–F81. Position 12 (Y12) interacts with NAD(+). Residue W99 participates in substrate binding. An FMN-binding site is contributed by H134.

This sequence belongs to the WrbA family. FMN serves as cofactor.

The enzyme catalyses a quinone + NADH + H(+) = a quinol + NAD(+). It carries out the reaction a quinone + NADPH + H(+) = a quinol + NADP(+). The polypeptide is NAD(P)H dehydrogenase (quinone) (Tolumonas auensis (strain DSM 9187 / NBRC 110442 / TA 4)).